Consider the following 516-residue polypeptide: Delta(24)-sterol reductase (516 aa).

Positions 1–22 (MEPAVSLAVCALLFLLWVRVKG) are cleaved as a signal peptide. At 23–31 (LEFVLIHQR) the chain is on the lumenal side. Residues 32 to 52 (WVFVCLFLLPLSLIFDIYYYV) form a helical membrane-spanning segment. Residues 53–516 (RAWVVFKLSS…YDKICKAARH (464 aa)) are Cytoplasmic-facing. One can recognise an FAD-binding PCMH-type domain in the interval 58–234 (FKLSSAPRLH…VAAEIRIIPA (177 aa)). 163-175 (TVGGLIMGTGIES) serves as a coordination point for FAD.

The protein belongs to the FAD-binding oxidoreductase/transferase type 4 family. As to quaternary structure, interacts with DHCR7; this interaction regulates DHCR7 activity. It depends on FAD as a cofactor.

It localises to the endoplasmic reticulum membrane. Its subcellular location is the golgi apparatus membrane. The catalysed reaction is cholesterol + NADP(+) = desmosterol + NADPH + H(+). It catalyses the reaction lanosterol + NADPH + H(+) = 24,25-dihydrolanosterol + NADP(+). The enzyme catalyses 5alpha-cholest-8-en-3beta-ol + NADP(+) = zymosterol + NADPH + H(+). The protein operates within steroid biosynthesis; cholesterol biosynthesis. Its function is as follows. Catalyzes the reduction of the delta-24 double bond of sterol intermediates during cholesterol biosynthesis. In addition to its cholesterol-synthesizing activity, can protect cells from oxidative stress by reducing caspase 3 activity during apoptosis induced by oxidative stress. Also protects against amyloid-beta peptide-induced apoptosis. The chain is Delta(24)-sterol reductase (Dhcr24) from Rattus norvegicus (Rat).